Consider the following 275-residue polypeptide: MHLLRTLLLRSNTSNISLLTKCSFRASPLHKWPISLRSGSQISLLPTEQKKWLHSQPKQQDTATKTPVHDLPSGIQHQSEETSPSARSSISTDPSSIAEEDPLQDQSIGLLKRFKKTFRQHGKVLIPVHLVTSSIWFGSFYYAAMQGVNVVPFLEYIGLPDGIVNILKNSQGGNALTAYAMYKIATPARYTVTLGGTSVSVKYLRKYGYLSTPPLVKDYFQDRMEETKELFTEKMEETRDIISGKMEETKDRISEKLQETKDRVAFRKKKNEDME.

The disordered stretch occupies residues 51 to 100 (KWLHSQPKQQDTATKTPVHDLPSGIQHQSEETSPSARSSISTDPSSIAEE). Polar residues-rich tracts occupy residues 56–65 (QPKQQDTATK) and 75–95 (IQHQ…TDPS). One can recognise a DUF1279 domain in the interval 105–217 (DQSIGLLKRF…GYLSTPPLVK (113 aa)). A helical transmembrane segment spans residues 124–144 (VLIPVHLVTSSIWFGSFYYAA). Residues 221-275 (QDRMEETKELFTEKMEETRDIISGKMEETKDRISEKLQETKDRVAFRKKKNEDME) adopt a coiled-coil conformation.

It belongs to the FAM210 family.

The protein resides in the membrane. The protein localises to the mitochondrion. It localises to the cytoplasm. In terms of biological role, may play a role in the structure and strength of both muscle and bone. In Xenopus laevis (African clawed frog), this protein is Protein FAM210A (fam210a).